Consider the following 117-residue polypeptide: Large ribosomal subunit protein bL20c (117 aa).

It belongs to the bacterial ribosomal protein bL20 family.

The protein resides in the plastid. It is found in the chloroplast. In terms of biological role, binds directly to 23S ribosomal RNA and is necessary for the in vitro assembly process of the 50S ribosomal subunit. It is not involved in the protein synthesizing functions of that subunit. The sequence is that of Large ribosomal subunit protein bL20c from Acorus calamus (Sweet flag).